Reading from the N-terminus, the 676-residue chain is MLRRHGLFWLKTCPRLNVLLNQSIPIPHLLHSRDICQQRWYAKGKRRNQISKKELKPLNFSIPNYISVNKLANLLNCRVERLIKDLTALGFENITTTYILSKEYVELILQEYNFALPNLSTSTNLDNVYDELKSPVNPKLLTKRAPVVTIMGHVDHGKTTIIDYLRKSSVVAQEHGGITQHIGAFQITAPKSGKKITFLDTPGHAAFLKMRERGANITDIIVLVVSVEDSLMPQTLEAIKHAKNSGNEMIIAITKIDRIPQPKEREKKIEKVINDLIVQGIPVEKIGGDVQVIPISAKTGENMDLLEESIVLLSEVMDIRAENSPKTIAEGWIIESQVKKQVGNVATVLVKKGTLQKGKILICGNTFCKIKNLIDDKGIPILKATPSYATEVLGWKDVPHVGDEVIQVKSEAIAKKFISKRQDLIEVQKNSSIVEKLNEERALAKEQHLNKELEHENTVQEHEQNTGPKLINYIIKCDVSGSAEAVSESISSLGNDEVRCNVISSSVGIPTESDLKMAQITESTILCFNLGNLPSEVINNRAGIKIKQYNVIYKLIEDVTETLTENLKPIFEKKIVSTVDVRETFDFRLKKKIIRIAGCKVNNGVIKKNSLVQVVRGPNEDVIFDGKISTLKHNKDDVAEVSKGHECGITFESGFEGFKPGDKILVYENVRVPRYL.

The tr-type G domain occupies 143–326; it reads KRAPVVTIMG…MDIRAENSPK (184 aa). Positions 152-159 are G1; sequence GHVDHGKT. Residue 152–159 coordinates GTP; sequence GHVDHGKT. Residues 177-181 are G2; it reads GITQH. Residues 200–203 and 254–257 each bind GTP; these read DTPG and TKID. Residues 200 to 203 are G3; that stretch reads DTPG. The segment at 254 to 257 is G4; it reads TKID. Positions 296–298 are G5; that stretch reads SAK.

This sequence belongs to the TRAFAC class translation factor GTPase superfamily. Classic translation factor GTPase family. IF-2 subfamily.

Its subcellular location is the mitochondrion. One of the essential components for the initiation of protein synthesis. Protects formylmethionyl-tRNA from spontaneous hydrolysis and promotes its binding to the 30S ribosomal subunits. Also involved in the hydrolysis of GTP during the formation of the 70S ribosomal complex. In Saccharomyces cerevisiae (strain ATCC 204508 / S288c) (Baker's yeast), this protein is Translation initiation factor IF-2, mitochondrial (IFM1).